An 88-amino-acid polypeptide reads, in one-letter code: Putative transmembrane protein ORF24 (88 aa).

3 helical membrane passes run 16–36, 42–62, and 64–84; these read LNMG…WAGM, AVFV…VTQF, and FIWF…VASI.

The protein resides in the host membrane. This Haloarcula hispanica (His1V) protein is Putative transmembrane protein ORF24.